We begin with the raw amino-acid sequence, 727 residues long: Long-chain-fatty-acid--[acyl-carrier-protein] ligase AEE15, chloroplastic (727 aa).

A chloroplast-targeting transit peptide spans 1–66 (MQIRLKPDYS…PSFRRFRVHC (66 aa)).

Belongs to the ATP-dependent AMP-binding enzyme family.

It localises to the plastid. The protein resides in the chloroplast. The catalysed reaction is a long-chain fatty acid + holo-[ACP] + ATP = a long-chain fatty acyl-[ACP] + AMP + diphosphate. Its function is as follows. Probably involved in the activation of fatty acids to acyl-carrier-protein prior to fatty acid elongation in plastids. Acts on medium- to long-chain fatty acids. The chain is Long-chain-fatty-acid--[acyl-carrier-protein] ligase AEE15, chloroplastic (AAE15) from Arabidopsis thaliana (Mouse-ear cress).